We begin with the raw amino-acid sequence, 159 residues long: Na(+)/H(+) antiporter subunit E1 (159 aa).

Transmembrane regions (helical) follow at residues 1–21, 27–47, 49–69, and 101–121; these read MAVQLVLNFIIAVFWLFVTNS, FVLGFIFGLVLVYLLHRVLPG, FYVITLYRIIKLIIIFLIELI, and WQIVLLSNLITLTPGTVVLGV.

Belongs to the CPA3 antiporters (TC 2.A.63) subunit E family. May form a heterooligomeric complex that consists of seven subunits: mnhA1, mnhB1, mnhC1, mnhD1, mnhE1, mnhF1 and mnhG1.

It localises to the cell membrane. Functionally, mnh complex is a Na(+)/H(+) antiporter involved in Na(+) excretion. The chain is Na(+)/H(+) antiporter subunit E1 (mnhE1) from Staphylococcus aureus (strain bovine RF122 / ET3-1).